A 254-amino-acid polypeptide reads, in one-letter code: MSFVVVIPARYQSSRLPGKPLADIHGKPMIAWVVERAKQAGASQVIVAVDDERVAAAVSALGVDVCMTGSHHQSGTERLAEVCEKYAFAPDTIIVNVQGDEPLIPPAIITQVADNLANTSAPMATLAVAIEDEHELFNPNAVKVVMDKQGYALYFSRATIPWDRDGFAQQPKQWRHTFLRHIGIYAYRAGFIRQYVSWPVSPLEQIESLEQLRVLWHSEKIHVAVAAENPPAGVDTAEDLEKVRRFLGNIKSEK.

Belongs to the KdsB family.

It localises to the cytoplasm. It carries out the reaction 3-deoxy-alpha-D-manno-oct-2-ulosonate + CTP = CMP-3-deoxy-beta-D-manno-octulosonate + diphosphate. Its pathway is nucleotide-sugar biosynthesis; CMP-3-deoxy-D-manno-octulosonate biosynthesis; CMP-3-deoxy-D-manno-octulosonate from 3-deoxy-D-manno-octulosonate and CTP: step 1/1. It functions in the pathway bacterial outer membrane biogenesis; lipopolysaccharide biosynthesis. Its function is as follows. Activates KDO (a required 8-carbon sugar) for incorporation into bacterial lipopolysaccharide in Gram-negative bacteria. The protein is 3-deoxy-manno-octulosonate cytidylyltransferase of Tolumonas auensis (strain DSM 9187 / NBRC 110442 / TA 4).